Here is an 86-residue protein sequence, read N- to C-terminus: Omega-theraphotoxin-Hhn1a 1 (86 aa).

Positions 1-21 are cleaved as a signal peptide; sequence MKSIVFVALFGLALLAVVCSA. Positions 22–50 are excised as a propeptide; the sequence is SEDAHKELLKEVVRAMVVDKTDAVQAEER. 3 disulfides stabilise this stretch: Cys-52-Cys-66, Cys-59-Cys-71, and Cys-65-Cys-78.

Belongs to the neurotoxin 10 (Hwtx-1) family. 17 (Hntx-9) subfamily. Expressed by the venom gland.

The protein localises to the secreted. Ion channel inhibitor. This Cyriopagopus hainanus (Chinese bird spider) protein is Omega-theraphotoxin-Hhn1a 1.